The sequence spans 348 residues: Selenide, water dikinase (348 aa).

Cysteine 17 is a catalytic residue. ATP-binding positions include lysine 20 and 47 to 49 (RAD). Aspartate 50 is a Mg(2+) binding site. ATP-binding positions include aspartate 67, aspartate 90, and 138–140 (GHT). Aspartate 90 contacts Mg(2+). Aspartate 226 is a binding site for Mg(2+).

It belongs to the selenophosphate synthase 1 family. Class I subfamily. As to quaternary structure, homodimer. Requires Mg(2+) as cofactor.

It carries out the reaction hydrogenselenide + ATP + H2O = selenophosphate + AMP + phosphate + 2 H(+). Its function is as follows. Synthesizes selenophosphate from selenide and ATP. This Pelobacter propionicus (strain DSM 2379 / NBRC 103807 / OttBd1) protein is Selenide, water dikinase.